Reading from the N-terminus, the 525-residue chain is Peptide chain release factor 3 (525 aa).

Residues 9–276 (AKRRTFAIIS…GFTRYAPAPQ (268 aa)) form the tr-type G domain. GTP-binding positions include 18 to 25 (SHPDAGKT), 86 to 90 (DTPGH), and 140 to 143 (NKFD).

Belongs to the TRAFAC class translation factor GTPase superfamily. Classic translation factor GTPase family. PrfC subfamily.

The protein resides in the cytoplasm. In terms of biological role, increases the formation of ribosomal termination complexes and stimulates activities of RF-1 and RF-2. It binds guanine nucleotides and has strong preference for UGA stop codons. It may interact directly with the ribosome. The stimulation of RF-1 and RF-2 is significantly reduced by GTP and GDP, but not by GMP. The protein is Peptide chain release factor 3 of Francisella tularensis subsp. novicida (strain U112).